Here is a 232-residue protein sequence, read N- to C-terminus: 5'-methylthioadenosine/S-adenosylhomocysteine nucleosidase (232 aa).

Catalysis depends on glutamate 12, which acts as the Proton acceptor. Residues glycine 78, isoleucine 152, and methionine 173 to glutamate 174 each bind substrate. The Proton donor role is filled by aspartate 197.

The protein belongs to the PNP/UDP phosphorylase family. MtnN subfamily. Homodimer.

It carries out the reaction S-adenosyl-L-homocysteine + H2O = S-(5-deoxy-D-ribos-5-yl)-L-homocysteine + adenine. The enzyme catalyses S-methyl-5'-thioadenosine + H2O = 5-(methylsulfanyl)-D-ribose + adenine. The catalysed reaction is 5'-deoxyadenosine + H2O = 5-deoxy-D-ribose + adenine. It participates in amino-acid biosynthesis; L-methionine biosynthesis via salvage pathway; S-methyl-5-thio-alpha-D-ribose 1-phosphate from S-methyl-5'-thioadenosine (hydrolase route): step 1/2. Its function is as follows. Catalyzes the irreversible cleavage of the glycosidic bond in both 5'-methylthioadenosine (MTA) and S-adenosylhomocysteine (SAH/AdoHcy) to adenine and the corresponding thioribose, 5'-methylthioribose and S-ribosylhomocysteine, respectively. Also cleaves 5'-deoxyadenosine, a toxic by-product of radical S-adenosylmethionine (SAM) enzymes, into 5-deoxyribose and adenine. Thus, is required for in vivo function of the radical SAM enzymes biotin synthase and lipoic acid synthase, that are inhibited by 5'-deoxyadenosine accumulation. The chain is 5'-methylthioadenosine/S-adenosylhomocysteine nucleosidase from Salmonella dublin (strain CT_02021853).